A 179-amino-acid chain; its full sequence is UPF0134 protein MPN_145 (179 aa).

The protein belongs to the UPF0134 family.

This is UPF0134 protein MPN_145 from Mycoplasma pneumoniae (strain ATCC 29342 / M129 / Subtype 1) (Mycoplasmoides pneumoniae).